The primary structure comprises 152 residues: Protein NrdI (152 aa).

This sequence belongs to the NrdI family.

Its function is as follows. Probably involved in ribonucleotide reductase function. In Rhodococcus opacus (strain B4), this protein is Protein NrdI.